We begin with the raw amino-acid sequence, 252 residues long: Chitooligosaccharide deacetylase (252 aa).

Positions 61 and 125 each coordinate Mg(2+).

It belongs to the YdjC deacetylase family. ChbG subfamily. Homodimer. The cofactor is Mg(2+).

The protein resides in the cytoplasm. It carries out the reaction N,N'-diacetylchitobiose + H2O = N-acetyl-beta-D-glucosaminyl-(1-&gt;4)-D-glucosamine + acetate. The enzyme catalyses diacetylchitobiose-6'-phosphate + H2O = N'-monoacetylchitobiose-6'-phosphate + acetate. Its pathway is glycan degradation; chitin degradation. Functionally, involved in the degradation of chitin. ChbG is essential for growth on the acetylated chitooligosaccharides chitobiose and chitotriose but is dispensable for growth on cellobiose and chitosan dimer, the deacetylated form of chitobiose. Deacetylation of chitobiose-6-P and chitotriose-6-P is necessary for both the activation of the chb promoter by the regulatory protein ChbR and the hydrolysis of phosphorylated beta-glucosides by the phospho-beta-glucosidase ChbF. Catalyzes the removal of only one acetyl group from chitobiose-6-P to yield monoacetylchitobiose-6-P, the inducer of ChbR and the substrate of ChbF. The chain is Chitooligosaccharide deacetylase from Salmonella paratyphi C (strain RKS4594).